The sequence spans 310 residues: Repression factor of MSEs protein 1 (310 aa).

Disordered stretches follow at residues 83–155 (TQEV…EANA) and 192–230 (DGIR…DEGE). A compositionally biased stretch (low complexity) spans 92-106 (RNTSSSSSSTRSNSS). Polar residues predominate over residues 107–120 (ADISDTEYSGENTP). The segment covering 127-136 (SRRRRTRSRA) has biased composition (basic residues). Over residues 139 to 155 (RENSLPASLPSISEANA) the composition is skewed to polar residues. The segment covering 192–208 (DGIRRRSSRISERDKRR) has biased composition (basic and acidic residues). The residue at position 215 (serine 215) is a Phosphoserine.

In terms of assembly, interacts directly with HST1 and SUM1. Required for the interaction between HST1 and SUM1.

The protein localises to the nucleus. Tethering factor required for histone deacetylase HST1-mediated repression. Probably involved in targeting HST1 to a subset of SUM1-regulated genes. The sequence is that of Repression factor of MSEs protein 1 (RFM1) from Saccharomyces cerevisiae (strain ATCC 204508 / S288c) (Baker's yeast).